A 204-amino-acid polypeptide reads, in one-letter code: GTP cyclohydrolase 1 (204 aa).

Positions 92, 95, and 165 each coordinate Zn(2+).

It belongs to the GTP cyclohydrolase I family. As to quaternary structure, homomer.

It carries out the reaction GTP + H2O = 7,8-dihydroneopterin 3'-triphosphate + formate + H(+). It functions in the pathway cofactor biosynthesis; 7,8-dihydroneopterin triphosphate biosynthesis; 7,8-dihydroneopterin triphosphate from GTP: step 1/1. This is GTP cyclohydrolase 1 from Mycobacteroides abscessus (strain ATCC 19977 / DSM 44196 / CCUG 20993 / CIP 104536 / JCM 13569 / NCTC 13031 / TMC 1543 / L948) (Mycobacterium abscessus).